We begin with the raw amino-acid sequence, 238 residues long: Protein Iojap, chloroplastic (238 aa).

A chloroplast-targeting transit peptide spans 1–66 (MASSTGLTVA…KILTSLSNSR (66 aa)).

The protein belongs to the Iojap/RsfS family. As to quaternary structure, interacts with chloroplast ribosomal protein uL14c (rpl14).

It is found in the plastid. The protein resides in the chloroplast. Functionally, may be a ribosome silencing factor (Potential). Involved in plastid biogenesis. This is Protein Iojap, chloroplastic (IJ) from Arabidopsis thaliana (Mouse-ear cress).